The following is a 449-amino-acid chain: Bifunctional protein GlmU (449 aa).

Positions 1-229 (MKLSAVILAA…EEDIYGINDR (229 aa)) are pyrophosphorylase. Residues 8 to 11 (LAAG), Lys-22, Gln-73, and 78 to 79 (GT) contribute to the UDP-N-acetyl-alpha-D-glucosamine site. Asp-102 serves as a coordination point for Mg(2+). Residues Gly-139, Glu-154, Asn-169, and Asn-227 each coordinate UDP-N-acetyl-alpha-D-glucosamine. A Mg(2+)-binding site is contributed by Asn-227. The linker stretch occupies residues 230 to 250 (VQLAQAENILRQRKNRELMLS). The tract at residues 251 to 449 (GVSLMDPAST…AGQKHLPRKG (199 aa)) is N-acetyltransferase. Positions 332 and 350 each coordinate UDP-N-acetyl-alpha-D-glucosamine. Catalysis depends on His-362, which acts as the Proton acceptor. UDP-N-acetyl-alpha-D-glucosamine contacts are provided by Tyr-365 and Asn-376. Residues Ala-379, 385 to 386 (NY), Ser-404, Ala-422, and Arg-439 contribute to the acetyl-CoA site.

The protein in the N-terminal section; belongs to the N-acetylglucosamine-1-phosphate uridyltransferase family. In the C-terminal section; belongs to the transferase hexapeptide repeat family. Homotrimer. Mg(2+) serves as cofactor.

The protein localises to the cytoplasm. It carries out the reaction alpha-D-glucosamine 1-phosphate + acetyl-CoA = N-acetyl-alpha-D-glucosamine 1-phosphate + CoA + H(+). It catalyses the reaction N-acetyl-alpha-D-glucosamine 1-phosphate + UTP + H(+) = UDP-N-acetyl-alpha-D-glucosamine + diphosphate. The protein operates within nucleotide-sugar biosynthesis; UDP-N-acetyl-alpha-D-glucosamine biosynthesis; N-acetyl-alpha-D-glucosamine 1-phosphate from alpha-D-glucosamine 6-phosphate (route II): step 2/2. Its pathway is nucleotide-sugar biosynthesis; UDP-N-acetyl-alpha-D-glucosamine biosynthesis; UDP-N-acetyl-alpha-D-glucosamine from N-acetyl-alpha-D-glucosamine 1-phosphate: step 1/1. It participates in bacterial outer membrane biogenesis; LPS lipid A biosynthesis. Its function is as follows. Catalyzes the last two sequential reactions in the de novo biosynthetic pathway for UDP-N-acetylglucosamine (UDP-GlcNAc). The C-terminal domain catalyzes the transfer of acetyl group from acetyl coenzyme A to glucosamine-1-phosphate (GlcN-1-P) to produce N-acetylglucosamine-1-phosphate (GlcNAc-1-P), which is converted into UDP-GlcNAc by the transfer of uridine 5-monophosphate (from uridine 5-triphosphate), a reaction catalyzed by the N-terminal domain. The sequence is that of Bifunctional protein GlmU from Syntrophomonas wolfei subsp. wolfei (strain DSM 2245B / Goettingen).